Consider the following 269-residue polypeptide: Phosphonoacetaldehyde hydrolase (269 aa).

The active-site Nucleophile is aspartate 10. Mg(2+) contacts are provided by aspartate 10 and alanine 12. The active-site Schiff-base intermediate with substrate is the lysine 52. Aspartate 186 contributes to the Mg(2+) binding site.

Belongs to the HAD-like hydrolase superfamily. PhnX family. Homodimer. Mg(2+) is required as a cofactor.

It catalyses the reaction phosphonoacetaldehyde + H2O = acetaldehyde + phosphate + H(+). In terms of biological role, involved in phosphonate degradation. The sequence is that of Phosphonoacetaldehyde hydrolase from Salmonella heidelberg (strain SL476).